Reading from the N-terminus, the 263-residue chain is Ribonuclease HII (263 aa).

Residues Gln-71–Asn-262 form the RNase H type-2 domain. The a divalent metal cation site is built by Asp-77, Glu-78, and Asp-172.

It belongs to the RNase HII family. Mn(2+) is required as a cofactor. Mg(2+) serves as cofactor.

The protein localises to the cytoplasm. The enzyme catalyses Endonucleolytic cleavage to 5'-phosphomonoester.. Endonuclease that specifically degrades the RNA of RNA-DNA hybrids. This chain is Ribonuclease HII, found in Streptococcus pyogenes serotype M5 (strain Manfredo).